Consider the following 468-residue polypeptide: Cyclin-T1.1 (468 aa).

Residues 336–354 (KERGVEEERRKRERDRMAG) are compositionally biased toward basic and acidic residues. Positions 336 to 468 (KERGVEEERR…DMDLEDGELE (133 aa)) are disordered. Positions 387 to 402 (APPPIPPQLNFPPPPI) are enriched in pro residues. The segment covering 458–468 (SDMDLEDGELE) has biased composition (acidic residues).

Belongs to the cyclin family. Cyclin C subfamily.

Its function is as follows. Regulatory subunit of the cyclin-dependent kinase pair (CDK9/cyclin T) complex, also called positive transcription elongation factor B (P-TEFb), which is proposed to facilitate the transition from abortive to production elongation by phosphorylating the CTD (carboxy-terminal domain) of the large subunit of RNA polymerase II (RNAP II). In Caenorhabditis elegans, this protein is Cyclin-T1.1.